A 159-amino-acid chain; its full sequence is SsrA-binding protein (159 aa).

This sequence belongs to the SmpB family.

It localises to the cytoplasm. In terms of biological role, required for rescue of stalled ribosomes mediated by trans-translation. Binds to transfer-messenger RNA (tmRNA), required for stable association of tmRNA with ribosomes. tmRNA and SmpB together mimic tRNA shape, replacing the anticodon stem-loop with SmpB. tmRNA is encoded by the ssrA gene; the 2 termini fold to resemble tRNA(Ala) and it encodes a 'tag peptide', a short internal open reading frame. During trans-translation Ala-aminoacylated tmRNA acts like a tRNA, entering the A-site of stalled ribosomes, displacing the stalled mRNA. The ribosome then switches to translate the ORF on the tmRNA; the nascent peptide is terminated with the 'tag peptide' encoded by the tmRNA and targeted for degradation. The ribosome is freed to recommence translation, which seems to be the essential function of trans-translation. This chain is SsrA-binding protein, found in Coxiella burnetii (strain RSA 493 / Nine Mile phase I).